We begin with the raw amino-acid sequence, 97 residues long: UPF0235 protein HAPS_1504 (97 aa).

Belongs to the UPF0235 family.

The chain is UPF0235 protein HAPS_1504 from Glaesserella parasuis serovar 5 (strain SH0165) (Haemophilus parasuis).